The sequence spans 439 residues: O-fucosyltransferase 13 (439 aa).

Residues proline 8 to serine 28 form a helical; Signal-anchor for type II membrane protein membrane-spanning segment. Asparagine 104 and asparagine 119 each carry an N-linked (GlcNAc...) asparagine glycan. Residue histidine 238 to arginine 240 coordinates substrate. Asparagine 293 carries N-linked (GlcNAc...) asparagine glycosylation.

This sequence belongs to the glycosyltransferase GT106 family.

The protein localises to the membrane. It participates in glycan metabolism. In Arabidopsis thaliana (Mouse-ear cress), this protein is O-fucosyltransferase 13.